The following is a 102-amino-acid chain: Small ribosomal subunit protein uS10 (102 aa).

Residues 34 to 58 (VSGPVPLPTKTLEVPSRKSPDGEGT) are disordered.

This sequence belongs to the universal ribosomal protein uS10 family. In terms of assembly, part of the 30S ribosomal subunit.

Functionally, involved in the binding of tRNA to the ribosomes. In Halobacterium salinarum (strain ATCC 29341 / DSM 671 / R1), this protein is Small ribosomal subunit protein uS10.